Here is a 650-residue protein sequence, read N- to C-terminus: Chaperone protein HtpG (650 aa).

Residues 1 to 344 form an a; substrate-binding region; it reads MSKHTHSFQA…SADLPLNVSR (344 aa). The tract at residues 345–582 is b; that stretch reads ELLQESRDVR…DGGMSTQLAR (238 aa). Residues 583–650 form a c region; sequence LLKQAGQSAP…YVKRVNALLA (68 aa).

It belongs to the heat shock protein 90 family. In terms of assembly, homodimer.

Its subcellular location is the cytoplasm. Functionally, molecular chaperone. Has ATPase activity. The chain is Chaperone protein HtpG from Acidovorax sp. (strain JS42).